We begin with the raw amino-acid sequence, 464 residues long: Citrate synthase, mitochondrial (464 aa).

Residues 1 to 27 constitute a mitochondrion transit peptide; it reads MALLTAATRLLGAKNSSCLVLAARHAS. The SIFI-degron signature appears at 2-21; sequence ALLTAATRLLGAKNSSCLVL. Lys-57 is subject to N6-succinyllysine. The residue at position 76 (Lys-76) is an N6-acetyllysine; alternate. Lys-76 is subject to N6-succinyllysine; alternate. Residues Lys-103 and Lys-193 each carry the N6-succinyllysine modification. Ser-226 is modified (phosphoserine). His-301 is a catalytic residue. Lys-321 and Lys-327 each carry N6-acetyllysine; alternate. Lys-321 and Lys-327 each carry N6-succinyllysine; alternate. The active site involves His-347. Arg-356 is a binding site for oxaloacetate. An N6-acetyllysine; alternate modification is found at Lys-375. At Lys-375 the chain carries N6-succinyllysine; alternate. Residue Lys-382 is modified to N6-acetyllysine. Position 393 is an N6-acetyllysine; alternate (Lys-393). Residue Lys-393 is modified to N6-succinyllysine; alternate. N6,N6,N6-trimethyllysine is present on Lys-395. Asp-402 is a catalytic residue. Residues Arg-428 and Arg-448 each coordinate oxaloacetate. At Lys-450 the chain carries N6-succinyllysine. Position 459 is an N6-acetyllysine; alternate (Lys-459). Lys-459 is subject to N6-succinyllysine; alternate.

The protein belongs to the citrate synthase family. Homodimer. In terms of processing, methylated. Trimethylation at Lys-395 by CSKMT decreases citrate synthase activity. In response to mitochondrial stress, the precursor protein is ubiquitinated by the SIFI complex in the cytoplasm before mitochondrial import, leading to its degradation. Within the SIFI complex, UBR4 initiates ubiquitin chain that are further elongated or branched by KCMF1.

The protein localises to the mitochondrion matrix. It carries out the reaction oxaloacetate + acetyl-CoA + H2O = citrate + CoA + H(+). The protein operates within carbohydrate metabolism; tricarboxylic acid cycle; isocitrate from oxaloacetate: step 1/2. Functionally, key enzyme of the Krebs tricarboxylic acid cycle which catalyzes the synthesis of citrate from acetyl coenzyme A and oxaloacetate. The protein is Citrate synthase, mitochondrial (Cs) of Mus musculus (Mouse).